Consider the following 153-residue polypeptide: MKMLKKGTAVLFVMIMAVMLVACGDKEETKTYTLSQNGVDSKLTYTYKGDKVTKQTAENTMSYASLGVASKEDAEKMLKATSDKFQGIDGLKEKIEYKDDKAIETLEVDYTKISSEDMNKIPGMSSNGDTSKGISMEESAKMLESQGYKEVSK.

The signal sequence occupies residues 1–22; it reads MKMLKKGTAVLFVMIMAVMLVA. A lipid anchor (N-palmitoyl cysteine) is attached at cysteine 23. Residue cysteine 23 is the site of S-diacylglycerol cysteine attachment. The interval 117–153 is disordered; sequence DMNKIPGMSSNGDTSKGISMEESAKMLESQGYKEVSK. The segment covering 124–133 has biased composition (polar residues); sequence MSSNGDTSKG.

The protein to E.coli YehR.

It localises to the cell membrane. This is an uncharacterized protein from Listeria monocytogenes serovar 1/2a (strain ATCC BAA-679 / EGD-e).